Reading from the N-terminus, the 600-residue chain is NADH-quinone oxidoreductase subunit C/D (600 aa).

The interval 1–190 (MVNNMTDLTA…SPFELTKAKQ (190 aa)) is NADH dehydrogenase I subunit C. An NADH dehydrogenase I subunit D region spans residues 214–600 (DFMFLNLGPN…IDFVMSDVDR (387 aa)).

This sequence in the N-terminal section; belongs to the complex I 30 kDa subunit family. The protein in the C-terminal section; belongs to the complex I 49 kDa subunit family. In terms of assembly, NDH-1 is composed of 13 different subunits. Subunits NuoB, CD, E, F, and G constitute the peripheral sector of the complex.

The protein localises to the cell inner membrane. It catalyses the reaction a quinone + NADH + 5 H(+)(in) = a quinol + NAD(+) + 4 H(+)(out). Its function is as follows. NDH-1 shuttles electrons from NADH, via FMN and iron-sulfur (Fe-S) centers, to quinones in the respiratory chain. The immediate electron acceptor for the enzyme in this species is believed to be ubiquinone. Couples the redox reaction to proton translocation (for every two electrons transferred, four hydrogen ions are translocated across the cytoplasmic membrane), and thus conserves the redox energy in a proton gradient. The protein is NADH-quinone oxidoreductase subunit C/D of Escherichia coli O157:H7.